Reading from the N-terminus, the 476-residue chain is Bifunctional protein HldE (476 aa).

Residues 1-319 are ribokinase; sequence MKVSLPAFEK…EALALHHGES (319 aa). 195 to 198 is a binding site for ATP; the sequence is NMSE. Residue D264 is part of the active site. The tract at residues 345–476 is cytidylyltransferase; the sequence is MTNGCFDILH…AIIQNIMAKQ (132 aa).

The protein in the N-terminal section; belongs to the carbohydrate kinase PfkB family. This sequence in the C-terminal section; belongs to the cytidylyltransferase family. In terms of assembly, homodimer.

It carries out the reaction D-glycero-beta-D-manno-heptose 7-phosphate + ATP = D-glycero-beta-D-manno-heptose 1,7-bisphosphate + ADP + H(+). The enzyme catalyses D-glycero-beta-D-manno-heptose 1-phosphate + ATP + H(+) = ADP-D-glycero-beta-D-manno-heptose + diphosphate. The protein operates within nucleotide-sugar biosynthesis; ADP-L-glycero-beta-D-manno-heptose biosynthesis; ADP-L-glycero-beta-D-manno-heptose from D-glycero-beta-D-manno-heptose 7-phosphate: step 1/4. Its pathway is nucleotide-sugar biosynthesis; ADP-L-glycero-beta-D-manno-heptose biosynthesis; ADP-L-glycero-beta-D-manno-heptose from D-glycero-beta-D-manno-heptose 7-phosphate: step 3/4. Its function is as follows. Catalyzes the phosphorylation of D-glycero-D-manno-heptose 7-phosphate at the C-1 position to selectively form D-glycero-beta-D-manno-heptose-1,7-bisphosphate. Functionally, catalyzes the ADP transfer from ATP to D-glycero-beta-D-manno-heptose 1-phosphate, yielding ADP-D-glycero-beta-D-manno-heptose. This is Bifunctional protein HldE from Shewanella sp. (strain MR-4).